A 63-amino-acid chain; its full sequence is Conotoxin LeDr243 (63 aa).

The first 22 residues, 1-22 (MRCLPVFVILLLLIASTPSIDA), serve as a signal peptide directing secretion. A propeptide spanning residues 23-47 (RPKTKDDMPLASFNDNAKRILQILS) is cleaved from the precursor. Cys-60 is subject to Cysteine amide. Residues 62–63 (LG) constitute a propeptide that is removed on maturation.

The protein belongs to the conotoxin T superfamily. Contains 2 disulfide bonds that can be either 'C1-C3, C2-C4' or 'C1-C4, C2-C3', since these disulfide connectivities have been observed for conotoxins with cysteine framework V (for examples, see AC P0DQQ7 and AC P81755). As to expression, expressed by the venom duct.

It is found in the secreted. This is Conotoxin LeDr243 from Conus litteratus (Lettered cone).